The sequence spans 298 residues: N-acetylmuramic acid 6-phosphate etherase (298 aa).

The SIS domain occupies Ile55–Lys218. Glu83 serves as the catalytic Proton donor. Glu114 is an active-site residue.

This sequence belongs to the GCKR-like family. MurNAc-6-P etherase subfamily. Homodimer.

The catalysed reaction is N-acetyl-D-muramate 6-phosphate + H2O = N-acetyl-D-glucosamine 6-phosphate + (R)-lactate. It participates in amino-sugar metabolism; 1,6-anhydro-N-acetylmuramate degradation. It functions in the pathway amino-sugar metabolism; N-acetylmuramate degradation. Its pathway is cell wall biogenesis; peptidoglycan recycling. In terms of biological role, specifically catalyzes the cleavage of the D-lactyl ether substituent of MurNAc 6-phosphate, producing GlcNAc 6-phosphate and D-lactate. Together with AnmK, is also required for the utilization of anhydro-N-acetylmuramic acid (anhMurNAc) either imported from the medium or derived from its own cell wall murein, and thus plays a role in cell wall recycling. This is N-acetylmuramic acid 6-phosphate etherase from Shigella sonnei (strain Ss046).